Consider the following 142-residue polypeptide: Cytidine deaminase (142 aa).

The 131-residue stretch at 9–139 (RQLEALKRAA…ELLPMAFGPS (131 aa)) folds into the CMP/dCMP-type deaminase domain. Substrate is bound at residue 50-52 (NVE). Residue C61 coordinates Zn(2+). Catalysis depends on E63, which acts as the Proton donor. Zn(2+)-binding residues include C96 and C99.

Belongs to the cytidine and deoxycytidylate deaminase family. As to quaternary structure, homodimer. Zn(2+) serves as cofactor.

The enzyme catalyses cytidine + H2O + H(+) = uridine + NH4(+). It carries out the reaction 2'-deoxycytidine + H2O + H(+) = 2'-deoxyuridine + NH4(+). In terms of biological role, this enzyme scavenges exogenous and endogenous cytidine and 2'-deoxycytidine for UMP synthesis. The sequence is that of Cytidine deaminase (CDD1) from Saccharomyces cerevisiae (strain ATCC 204508 / S288c) (Baker's yeast).